Reading from the N-terminus, the 628-residue chain is Netrin-4 (628 aa).

The N-terminal stretch at 1–18 is a signal peptide; it reads MGSCARLLLLWGCTVVAA. Positions 30–261 constitute a Laminin N-terminal domain; sequence CEKACNPRMG…AIYDFIVKGS (232 aa). N-linked (GlcNAc...) asparagine glycans are attached at residues Asn-56 and Asn-163. 12 cysteine pairs are disulfide-bonded: Cys-262/Cys-271, Cys-264/Cys-293, Cys-295/Cys-304, Cys-307/Cys-329, Cys-332/Cys-341, Cys-334/Cys-359, Cys-362/Cys-371, Cys-374/Cys-392, Cys-395/Cys-413, Cys-397/Cys-420, Cys-422/Cys-431, and Cys-434/Cys-446. Laminin EGF-like domains are found at residues 262-331, 332-394, and 395-448; these read CFCN…ECRT, CKCN…ACKP, and CSCH…GCRP. A glycan (N-linked (GlcNAc...) asparagine) is linked at Asn-353. Asn-483 carries an N-linked (GlcNAc...) asparagine glycan. Intrachain disulfides connect Cys-506–Cys-576 and Cys-520–Cys-627. Positions 506-627 constitute an NTR domain; it reads CECKEQTLGN…KVMDILKREC (122 aa).

As to quaternary structure, may form a homodimer.

Its subcellular location is the secreted. The protein resides in the extracellular space. The protein localises to the extracellular matrix. Functionally, may play an important role in neural, kidney and vascular development. In Pongo abelii (Sumatran orangutan), this protein is Netrin-4 (NTN4).